The following is a 127-amino-acid chain: V-type proton ATPase subunit F (127 aa).

It belongs to the V-ATPase F subunit family. As to quaternary structure, V-ATPase is a heteromultimeric enzyme made up of two complexes: the ATP-hydrolytic V1 complex and the proton translocation V0 complex. The V1 complex consists of three catalytic AB heterodimers that form a heterohexamer, three peripheral stalks each consisting of EG heterodimers, one central rotor including subunits D and F, and the regulatory subunits C and H. The proton translocation complex V0 consists of the proton transport subunit a, a ring of proteolipid subunits c9c'', rotary subunit d, subunits e and f, and the accessory subunits VhaAC45 and ATP6AP2.

Subunit of the V1 complex of vacuolar(H+)-ATPase (V-ATPase), a multisubunit enzyme composed of a peripheral complex (V1) that hydrolyzes ATP and a membrane integral complex (V0) that translocates protons. V-ATPase is responsible for acidifying and maintaining the pH of intracellular compartments and in some cell types, is targeted to the plasma membrane, where it is responsible for acidifying the extracellular environment. The polypeptide is V-type proton ATPase subunit F (Aedes aegypti (Yellowfever mosquito)).